The chain runs to 792 residues: MHVIKRDGRQERVMFDKITSRIQKLCYGLNMDFVDPAQITMKVIQGLYSGVTTVELDTLAAETAATLTTKHPDYAILAARIAVSNLHKETKKVFSDVMEDLYNYINPHNGRHSPMVASSTLDIVMANKDRLNSAIIYDRDFSYNYFGFKTLERSYLLKINGKVAERPQHMLMRVSVGIHKEDIDAAIETYNLLSEKWFTHASPTLFNAGTNRPQLSSCFLLSMKDDSIEGIYDTLKQCALISKSAGGIGVAVSCIRATGSYIAGTNGNSNGLVPMLRVYNNTARYVDQGGNKRPGAFAIYLEPWHLDIFEFLDLKKNTGKEEQRARDLFFALWIPDLFMKRVETNQDWSLMCPNECPGLDEVWGEEFEKLYESYEKQGRVRKVVKAQQLWYAIIESQTETGTPYMLYKDSCNRKSNQQNLGTIKCSNLCTEIVEYTSKDEVAVCNLASLALNMYVTPEHTYDFEKLAEVTKVIVRNLNKIIDINYYPIPEAHLSNKRHRPIGIGVQGLADAFILMRYPFESPEAQLLNKQIFETIYYGALEASCELAKEYGPYETYEGSPVSKGILQYDMWNVAPTDLWDWKPLKEKIAKYGIRNSLLIAPMPTASTAQILGNNESIEPYTSNIYTRRVLSGEFQIVNPHLLKDLTERGLWNEEMKNQIIACNGSIQSIPEIPDDLKQLYKTVWEISQKTVLKMAAERGAFIDQSQSLNIHIAEPNYGKLTSMHFYGWKQGLKTGMYYLRTRPAANPIQFTLNKEKLKDKEKALKEEEEKERNTAAMVCSLENREECLMCGS.

In terms of domain architecture, ATP-cone spans 1-92; that stretch reads MHVIKRDGRQ…VSNLHKETKK (92 aa). Residues 5–6, 11–17, Thr53, and Asp57 each bind ATP; these read KR and ERVMFDK. Lys17 bears the N6-acetyllysine mark. GDP-binding residues include Ser202 and Ser217. Cys218 and Cys444 form a disulfide bridge. Residues 226 to 228, Lys243, Arg256, and 263 to 264 contribute to the dTTP site; these read DSI and AG. Lys376 carries the N6-acetyllysine modification. Asn427 serves as a coordination point for GDP. Residue Asn427 is the Proton acceptor of the active site. Residue Cys429 is the Cysteine radical intermediate of the active site. Residues Glu431 and 604–607 each bind GDP; that span reads TAST. The active-site Proton acceptor is the Glu431. At Thr751 the chain carries Phosphothreonine.

It belongs to the ribonucleoside diphosphate reductase large chain family. As to quaternary structure, heterodimer of a large and a small subunit. Interacts with RRM2B. Interacts with AHCYL1 which inhibits its activity.

The protein localises to the cytoplasm. The enzyme catalyses a 2'-deoxyribonucleoside 5'-diphosphate + [thioredoxin]-disulfide + H2O = a ribonucleoside 5'-diphosphate + [thioredoxin]-dithiol. Under complex allosteric control mediated by deoxynucleoside triphosphates and ATP binding to separate specificity and activation sites on the M1 subunit. The type of nucleotide bound at the specificity site determines substrate preference. It seems probable that ATP makes the enzyme reduce CDP and UDP, dGTP favors ADP reduction and dTTP favors GDP reduction. Stimulated by ATP and inhibited by dATP binding to the activity site, the dATP inhibition is mediated by AHCYL1 which stabilizes dATP in the site. Functionally, provides the precursors necessary for DNA synthesis. Catalyzes the biosynthesis of deoxyribonucleotides from the corresponding ribonucleotides. This is Ribonucleoside-diphosphate reductase large subunit (Rrm1) from Mus musculus (Mouse).